The following is a 366-amino-acid chain: Galactoside alpha-(1,2)-fucosyltransferase 1 (366 aa).

Residues 1 to 8 (MWPRSHRH) lie on the Cytoplasmic side of the membrane. A helical; Signal-anchor for type II membrane protein transmembrane segment spans residues 9–25 (LCLAFLLVCVLSAISFL). Residues 26 to 366 (IHFHQDSIRH…LSPLWPLAEP (341 aa)) are Lumenal-facing. N66, N302, and N328 each carry an N-linked (GlcNAc...) asparagine glycan.

The protein belongs to the glycosyltransferase 11 family.

It localises to the golgi apparatus. Its subcellular location is the golgi stack membrane. The enzyme catalyses a beta-D-galactosyl-(1-&gt;4)-N-acetyl-beta-D-glucosaminyl derivative + GDP-beta-L-fucose = an alpha-L-Fuc-(1-&gt;2)-beta-D-Gal-(1-&gt;4)-beta-D-GlcNAc derivative + GDP + H(+). It catalyses the reaction a ganglioside GA1 + GDP-beta-L-fucose = a ganglioside Fuc-GA1 + GDP + H(+). The catalysed reaction is a beta-D-Gal-(1-&gt;3)-beta-D-GlcNAc-(1-&gt;3)-beta-D-Gal-(1-&gt;4)-beta-D-Glc-(1&lt;-&gt;1')-Cer(d18:1(4E)) + GDP-beta-L-fucose = alpha-L-fucosyl-(1-&gt;2)- beta-D-galactosyl-(1-&gt;3)-N-acetyl-beta-D-glucosaminyl-(1-&gt;3)-beta-D-galactosyl-(1-&gt;4)-beta-D-glucosyl-(1&lt;-&gt;1')-N-acylsphing-4-enine + GDP + H(+). It carries out the reaction a neolactoside nLc4Cer(d18:1(4E)) + GDP-beta-L-fucose = a neolactoside IV(2)-alpha-Fuc-nLc4Cer(d18:1(4E)) + GDP + H(+). The enzyme catalyses a ganglioside GM1 + GDP-beta-L-fucose = a ganglioside Fuc-GM1 + GDP + H(+). It catalyses the reaction beta-D-galactosyl-(1-&gt;3)-N-acetyl-D-galactosamine + GDP-beta-L-fucose = alpha-L-fucosyl-(1-&gt;2)-beta-D-galactosyl-(1-&gt;3)-N-acetyl-D-galactosamine + GDP + H(+). Its pathway is protein modification; protein glycosylation. In terms of biological role, catalyzes the transfer of L-fucose, from a guanosine diphosphate-beta-L-fucose, to the terminal galactose residue of glycoconjugates through an alpha(1,2) linkage leading to H antigen synthesis that is an intermediate substrate in the synthesis of ABO blood group antigens. H antigen is essential for maturation of the glomerular layer of the main olfactory bulb, in cell migration and early cell-cell contacts during tumor associated angiogenesis. Preferentially fucosylates soluble lactose and to a lesser extent fucosylates glycolipids gangliosides GA1 and GM1a. In Saimiri boliviensis boliviensis (Bolivian squirrel monkey), this protein is Galactoside alpha-(1,2)-fucosyltransferase 1.